The primary structure comprises 684 residues: uncharacterized protein (684 aa).

The 186-residue stretch at 54–239 (LKYLYNKKDV…LLFNRDFEVV (186 aa)) folds into the Helicase ATP-binding domain. 67 to 74 (TSTASGKS) provides a ligand contact to ATP. The DEVH box signature appears at 181-184 (DELH). The region spanning 264–419 (LLRRLIENLV…YMPVNIKNRF (156 aa)) is the Helicase C-terminal domain.

This sequence belongs to the helicase family.

This is an uncharacterized protein from Methanocaldococcus jannaschii (strain ATCC 43067 / DSM 2661 / JAL-1 / JCM 10045 / NBRC 100440) (Methanococcus jannaschii).